An 85-amino-acid chain; its full sequence is Defensin-like protein 112 (85 aa).

The signal sequence occupies residues Met1 to Cys24. 4 disulfides stabilise this stretch: Cys40-Cys80, Cys46-Cys71, Cys56-Cys78, and Cys60-Cys79.

This sequence belongs to the DEFL family.

It is found in the secreted. This Arabidopsis thaliana (Mouse-ear cress) protein is Defensin-like protein 112.